The primary structure comprises 235 residues: MSKQLIYSGKAKDIYTTEDENLIISTYKDQATAFNGVKKEQIAGKGVLNNQISSFIFEKLNAAGVATHFVEKLSDTEQLNKKVKIIPLEVVLRNYTAGSFSKRFGVDEGIALETPIVEFYYKNDDLDDPFINDEHVKFLQIAGDQQIAYLKEETRRINELLKVWFAEIGLKLIDFKLEFGFDKDGKIILADEFSPDNCRLWDADGNHMDKDVFRRGLGELTDVYEIVWEKLQELK.

It belongs to the SAICAR synthetase family.

It catalyses the reaction 5-amino-1-(5-phospho-D-ribosyl)imidazole-4-carboxylate + L-aspartate + ATP = (2S)-2-[5-amino-1-(5-phospho-beta-D-ribosyl)imidazole-4-carboxamido]succinate + ADP + phosphate + 2 H(+). The protein operates within purine metabolism; IMP biosynthesis via de novo pathway; 5-amino-1-(5-phospho-D-ribosyl)imidazole-4-carboxamide from 5-amino-1-(5-phospho-D-ribosyl)imidazole-4-carboxylate: step 1/2. The polypeptide is Phosphoribosylaminoimidazole-succinocarboxamide synthase (Streptococcus pneumoniae (strain 70585)).